Here is a 78-residue protein sequence, read N- to C-terminus: NEDD8-like protein RUB3 (78 aa).

Gly-76 is covalently cross-linked (Glycyl lysine isopeptide (Gly-Lys) (interchain with K-? in acceptor proteins)). A propeptide spanning residues Cys-77–Cys-78 is cleaved from the precursor.

Detected in stems and flower buds, but not in leaves, mature flowers and seedlings.

May function as a stable post-translational protein modifier. This is NEDD8-like protein RUB3 (RUB3) from Arabidopsis thaliana (Mouse-ear cress).